Here is a 357-residue protein sequence, read N- to C-terminus: MGSLETEKTVTGYAARDSSGHLSPYTYNLRKKGPEDVIVKVIYCGICHSDLVQMRNEMGMSHYPMVPGHEVVGIVTEIGSEVKKFKVGEHVGVGCIVGSCRSCGNCNQSMEQYCSKRIWTYNDVNHDGTPTQGGFASSMVVDQMFVVRIPENLPLEQAAPLLCAGVTVFSPMKHFAMTEPGKKCGILGLGGVGHMGVKIAKAFGLHVTVISSSDKKKEEAMEVLGADAYLVSKDTEKMMEAAESLDYIMDTIPVAHPLEPYLALLKTNGKLVMLGVVPEPLHFVTPLLILGRRSIAGSFIGSMEETQETLDFCAEKKVSSMIEVVGLDYINTAMERLEKNDVRYRFVVDVAGSKLDN.

Position 47 (cysteine 47) interacts with Zn(2+). Serine 49 is an NADP(+) binding site. The Zn(2+) site is built by histidine 69, glutamate 70, cysteine 100, cysteine 103, cysteine 106, cysteine 114, and cysteine 163. Residues threonine 167, 188–193, 211–216, threonine 251, glycine 275, and 298–300 each bind NADP(+); these read GLGGVG, SSSDKK, and SFI.

It belongs to the zinc-containing alcohol dehydrogenase family. Homodimer. Zn(2+) serves as cofactor.

The enzyme catalyses (E)-cinnamyl alcohol + NADP(+) = (E)-cinnamaldehyde + NADPH + H(+). It carries out the reaction (E)-coniferol + NADP(+) = (E)-coniferaldehyde + NADPH + H(+). The catalysed reaction is (E)-sinapyl alcohol + NADP(+) = (E)-sinapaldehyde + NADPH + H(+). It catalyses the reaction (E)-4-coumaroyl alcohol + NADP(+) = (E)-4-coumaraldehyde + NADPH + H(+). The enzyme catalyses (E)-caffeyl alcohol + NADP(+) = (E)-caffeyl aldehyde + NADPH + H(+). Its pathway is aromatic compound metabolism; phenylpropanoid biosynthesis. In terms of biological role, involved in lignin biosynthesis. Catalyzes the final step specific for the production of lignin monomers. Catalyzes the NADPH-dependent reduction of coniferaldehyde, 5-hydroxyconiferaldehyde, sinapaldehyde, 4-coumaraldehyde and caffeyl aldehyde to their respective alcohols. This Pinus radiata (Monterey pine) protein is Probable cinnamyl alcohol dehydrogenase (CAD).